The chain runs to 185 residues: Ribosome-recycling factor (185 aa).

The protein belongs to the RRF family.

It is found in the cytoplasm. Responsible for the release of ribosomes from messenger RNA at the termination of protein biosynthesis. May increase the efficiency of translation by recycling ribosomes from one round of translation to another. The polypeptide is Ribosome-recycling factor (Salmonella paratyphi A (strain ATCC 9150 / SARB42)).